The following is a 526-amino-acid chain: Outer capsid protein VP5 (526 aa).

The involved in membrane permeabilization stretch occupies residues 1–42 (MGKVIRSLSRFGKKVGNALTSNTAKKIYSTIGKAAERFAESE).

Belongs to the orbivirus VP5 family.

The protein localises to the virion. VP5 protein is one of the two proteins (with VP2) which constitute the virus particle outer capsid. Acts as a membrane permeabilization protein that mediates release of viral particles from endosomal compartments into the cytoplasm. Permeabilization activity is probably negatively regulated by VP2 and is triggered by endosomal degradation of VP2 and exposure to low pH. In Bluetongue virus 1 (isolate Australia) (BTV 1), this protein is Outer capsid protein VP5 (Segment-6).